Consider the following 255-residue polypeptide: 3-deoxy-manno-octulosonate cytidylyltransferase (255 aa).

It belongs to the KdsB family.

It is found in the cytoplasm. It catalyses the reaction 3-deoxy-alpha-D-manno-oct-2-ulosonate + CTP = CMP-3-deoxy-beta-D-manno-octulosonate + diphosphate. Its pathway is nucleotide-sugar biosynthesis; CMP-3-deoxy-D-manno-octulosonate biosynthesis; CMP-3-deoxy-D-manno-octulosonate from 3-deoxy-D-manno-octulosonate and CTP: step 1/1. It participates in bacterial outer membrane biogenesis; lipopolysaccharide biosynthesis. Functionally, activates KDO (a required 8-carbon sugar) for incorporation into bacterial lipopolysaccharide in Gram-negative bacteria. The sequence is that of 3-deoxy-manno-octulosonate cytidylyltransferase from Thermodesulfovibrio yellowstonii (strain ATCC 51303 / DSM 11347 / YP87).